We begin with the raw amino-acid sequence, 97 residues long: Protein CYSTEINE-RICH TRANSMEMBRANE MODULE 7 (97 aa).

Residues Met-1–Pro-27 are disordered. Residues Gly-15 to Pro-27 show a composition bias toward pro residues. The helical transmembrane segment at Tyr-68–Val-88 threads the bilayer.

The protein belongs to the CYSTM1 family. As to quaternary structure, homodimer and heterodimers. Interacts with CYSTM3, CYSTM4, CYSTM5, CYSTM6, CYSTM10, WIH1/CYSTM13 and CYSTM11. Binds weakly to CYSTM1, CYSTM2 and CYSTM12. In terms of tissue distribution, mostly expressed in siliques and, to a lower extent, in stems, roots, leaves and flowers.

The protein resides in the cell membrane. Its function is as follows. Involved in resistance to abiotic stress. The polypeptide is Protein CYSTEINE-RICH TRANSMEMBRANE MODULE 7 (Arabidopsis thaliana (Mouse-ear cress)).